Reading from the N-terminus, the 458-residue chain is KAT8 regulatory NSL complex subunit 2 (458 aa).

Lysine 78 is covalently cross-linked (Glycyl lysine isopeptide (Lys-Gly) (interchain with G-Cter in SUMO2)). The tract at residues 126–182 (ELGSQTPESSRSEASRILDEDSWSDGDQEPITVDQTWRGDPDSEADSIDSDQEDPLK) is disordered. At threonine 131 the chain carries Phosphothreonine. Positions 135-144 (SRSEASRILD) are enriched in basic and acidic residues. A phosphoserine mark is found at serine 147, serine 149, serine 168, serine 172, and serine 175. Over residues 167 to 178 (DSEADSIDSDQE) the composition is skewed to acidic residues. A required for interaction with other NSL complex members region spans residues 308 to 364 (DVRCSNQSLPMTRHCLTHICQDTNQVLFKCCQGSEEVPCNKPVPVSLSEDPCCPLHF). The interval 419-458 (QMAGDGCRSQGPRNSEKAPAPLPQSGIATANGKPEPTSVS) is disordered.

In terms of assembly, component of the NSL complex at least composed of KAT8/MOF, KANSL1, KANSL2, KANSL3, MCRS1, PHF20, OGT1/OGT, WDR5 and HCFC1.

Its subcellular location is the nucleus. The protein resides in the mitochondrion. Non-catalytic component of the NSL histone acetyltransferase complex, a multiprotein complex that mediates histone H4 acetylation at 'Lys-5'- and 'Lys-8' (H4K5ac and H4K8ac) at transcription start sites and promotes transcription initiation. Required for NSL complex stability and for transcription of intraciliary transport genes in both ciliated and non-ciliated cells by regulating histone H4 acetylation at 'Lys-5'- and 'Lys-12' (H4K5ac and H4K12ac). This is necessary for cilium assembly in ciliated cells and for organization of the microtubule cytoskeleton in non-ciliated cells. Required within the NSL complex to maintain nuclear architecture stability by promoting KAT8-mediated acetylation of lamin LMNA. The polypeptide is KAT8 regulatory NSL complex subunit 2 (KANSL2) (Bos taurus (Bovine)).